We begin with the raw amino-acid sequence, 36 residues long: Toxin Iob1 (36 aa).

Disulfide bonds link cysteine 6–cysteine 21, cysteine 13–cysteine 26, and cysteine 20–cysteine 33.

It localises to the secreted. Binds reversibly and blocks N-type voltage-gated calcium channels (Cav). The protein is Toxin Iob1 of Isyndus obscurus (Assassin bug).